Consider the following 350-residue polypeptide: NADH-quinone oxidoreductase subunit H (350 aa).

8 helical membrane passes run 5–25 (FIIE…IMAM), 76–96 (FLFV…SAVI), 118–138 (IALL…MIGG), 162–182 (IAMG…SLKV), 190–210 (MNWN…CSFA), 243–263 (LFAE…LFFG), 284–304 (LLGI…YMWV), and 319–339 (LGWR…GAVI).

Belongs to the complex I subunit 1 family. In terms of assembly, NDH-1 is composed of 14 different subunits. Subunits NuoA, H, J, K, L, M, N constitute the membrane sector of the complex.

It localises to the cell inner membrane. It catalyses the reaction a quinone + NADH + 5 H(+)(in) = a quinol + NAD(+) + 4 H(+)(out). NDH-1 shuttles electrons from NADH, via FMN and iron-sulfur (Fe-S) centers, to quinones in the respiratory chain. The immediate electron acceptor for the enzyme in this species is believed to be ubiquinone. Couples the redox reaction to proton translocation (for every two electrons transferred, four hydrogen ions are translocated across the cytoplasmic membrane), and thus conserves the redox energy in a proton gradient. This subunit may bind ubiquinone. In Flavobacterium johnsoniae (strain ATCC 17061 / DSM 2064 / JCM 8514 / BCRC 14874 / CCUG 350202 / NBRC 14942 / NCIMB 11054 / UW101) (Cytophaga johnsonae), this protein is NADH-quinone oxidoreductase subunit H.